Here is a 172-residue protein sequence, read N- to C-terminus: uncharacterized protein (172 aa).

The signal sequence occupies residues 1–29 (MKKKQVMLALTAAAGLGLTALHSAPAAKA). SH3b domains are found at residues 42–105 (SDTY…MKTA) and 112–172 (KQTA…LQMR).

This is an uncharacterized protein from Bacillus subtilis (strain 168).